A 519-amino-acid chain; its full sequence is Polyamine aminopropyltransferase (519 aa).

Transmembrane regions (helical) follow at residues 17-37 (LLLVSVAICAASGLVYELALV), 53-73 (LIVAGYVAALGVGAILVKPFL), 86-106 (LLGLIGGLSALVLYMTFAVVG), 109-129 (LWMLVLATALIGILVGAELPL), 158-178 (LGALLGGLAWPFILLPWLGMM), 180-200 (GAAAAGMINLLAALFVGCVLL), and 208-228 (QFIRAVVALLVAIAVLGTVLV). The spermidine synthase stretch occupies residues 200 to 463 (LRHLLPRAQF…FQLCGPEGTE (264 aa)). The PABS domain occupies 225–459 (TVLVRSDGIV…GDWGFQLCGP (235 aa)). Gln255 contacts S-methyl-5'-thioadenosine. A spermidine-binding site is contributed by Asp307. Residues Glu326 and 358 to 359 (DA) contribute to the S-methyl-5'-thioadenosine site. Asp379 acts as the Proton acceptor in catalysis.

It belongs to the spermidine/spermine synthase family. Homodimer or homotetramer.

It localises to the cell membrane. It catalyses the reaction S-adenosyl 3-(methylsulfanyl)propylamine + putrescine = S-methyl-5'-thioadenosine + spermidine + H(+). The protein operates within amine and polyamine biosynthesis; spermidine biosynthesis; spermidine from putrescine: step 1/1. Its function is as follows. Catalyzes the irreversible transfer of a propylamine group from the amino donor S-adenosylmethioninamine (decarboxy-AdoMet) to putrescine (1,4-diaminobutane) to yield spermidine. The chain is Polyamine aminopropyltransferase from Corynebacterium efficiens (strain DSM 44549 / YS-314 / AJ 12310 / JCM 11189 / NBRC 100395).